The primary structure comprises 553 residues: Protein Early 65 kDa (553 aa).

The protein resides in the host cytoplasm. May participate in the recruitment of G-actin to the host nucleus. This Autographa californica nuclear polyhedrosis virus (AcMNPV) protein is Protein Early 65 kDa (HE65).